The primary structure comprises 105 residues: Small ribosomal subunit protein eS26 (105 aa).

This sequence belongs to the eukaryotic ribosomal protein eS26 family. Component of the small ribosomal subunit.

It localises to the cytoplasm. This chain is Small ribosomal subunit protein eS26 (RPS26), found in Encephalitozoon cuniculi (strain GB-M1) (Microsporidian parasite).